We begin with the raw amino-acid sequence, 226 residues long: Thioredoxin domain-containing protein 9 (226 aa).

The 129-residue stretch at 52–180 (LEALKKAQQQ…TTETLEWRLG (129 aa)) folds into the Thioredoxin domain. Residues Ser188, Ser221, and Ser223 each carry the phosphoserine modification.

Forms ternary complexes with the chaperonin TCP1 complex, spanning the cylindrical chaperonin cavity and contacting at least 2 subunits.

The protein resides in the cytoplasm. It is found in the nucleus. Its subcellular location is the cytoskeleton. It localises to the microtubule organizing center. The protein localises to the centrosome. The protein resides in the midbody. Its function is as follows. Significantly diminishes the chaperonin TCP1 complex ATPase activity, thus negatively impacts protein folding, including that of actin or tubulin. This Bos taurus (Bovine) protein is Thioredoxin domain-containing protein 9 (TXNDC9).